Consider the following 402-residue polypeptide: Probable glutamate 5-kinase (402 aa).

The substrate site is built by serine 58, aspartate 145, and asparagine 157. ATP is bound by residues 177–178 (TD) and 218–224 (TGGMKTK). One can recognise a PUA domain in the interval 295 to 373 (HGSLEIDRGA…KEIASILGYN (79 aa)).

It belongs to the glutamate 5-kinase family.

It is found in the cytoplasm. It catalyses the reaction L-glutamate + ATP = L-glutamyl 5-phosphate + ADP. The protein operates within amino-acid biosynthesis; L-proline biosynthesis; L-glutamate 5-semialdehyde from L-glutamate: step 1/2. In terms of biological role, catalyzes the transfer of a phosphate group to glutamate to form glutamate 5-phosphate which rapidly cyclizes to 5-oxoproline. The protein is Probable glutamate 5-kinase of Schizosaccharomyces pombe (strain 972 / ATCC 24843) (Fission yeast).